The following is a 319-amino-acid chain: Ferrochelatase (319 aa).

Fe cation-binding residues include His-193 and Glu-274.

It belongs to the ferrochelatase family.

The protein resides in the cytoplasm. It carries out the reaction heme b + 2 H(+) = protoporphyrin IX + Fe(2+). Its pathway is porphyrin-containing compound metabolism; protoheme biosynthesis; protoheme from protoporphyrin-IX: step 1/1. Its function is as follows. Catalyzes the ferrous insertion into protoporphyrin IX. In Actinobacillus pleuropneumoniae serotype 3 (strain JL03), this protein is Ferrochelatase.